Consider the following 309-residue polypeptide: 1,4-dihydroxy-2-naphthoyl-CoA synthase (309 aa).

Substrate is bound by residues R53, 98 to 102 (SGGDQ), Y110, 152 to 156 (WAAGG), T179, S185, Y282, and K297.

It belongs to the enoyl-CoA hydratase/isomerase family. MenB subfamily.

It catalyses the reaction 2-succinylbenzoyl-CoA + H(+) = 1,4-dihydroxy-2-naphthoyl-CoA + H2O. Its pathway is quinol/quinone metabolism; 1,4-dihydroxy-2-naphthoate biosynthesis; 1,4-dihydroxy-2-naphthoate from chorismate: step 6/7. The protein operates within quinol/quinone metabolism; menaquinone biosynthesis. Its function is as follows. Converts o-succinylbenzoyl-CoA (OSB-CoA) to 1,4-dihydroxy-2-naphthoyl-CoA (DHNA-CoA). This chain is 1,4-dihydroxy-2-naphthoyl-CoA synthase, found in Mycolicibacterium smegmatis (strain ATCC 700084 / mc(2)155) (Mycobacterium smegmatis).